The primary structure comprises 663 residues: DNA topoisomerase 4 subunit B (663 aa).

Residues Y7, N47, D74, 114-120, and K341 contribute to the ATP site; that span reads GLHGVGA. Residues 386–416 are disordered; that stretch reads REAARKAREDARSGKKNKRKDTLLSGKLTPA. Over residues 387-398 the composition is skewed to basic and acidic residues; sequence EAARKAREDARS. The Toprim domain maps to 424 to 538; it reads NELYLVEGDS…ADRVFIALPP (115 aa). Positions 430, 503, and 505 each coordinate Mg(2+).

This sequence belongs to the type II topoisomerase family. ParE type 2 subfamily. As to quaternary structure, heterotetramer composed of ParC and ParE. Mg(2+) serves as cofactor. The cofactor is Mn(2+). Requires Ca(2+) as cofactor.

It carries out the reaction ATP-dependent breakage, passage and rejoining of double-stranded DNA.. Functionally, topoisomerase IV is essential for chromosome segregation. It relaxes supercoiled DNA. Performs the decatenation events required during the replication of a circular DNA molecule. This chain is DNA topoisomerase 4 subunit B, found in Staphylococcus aureus (strain MSSA476).